Here is a 477-residue protein sequence, read N- to C-terminus: Transmembrane and coiled-coil domain protein 3 (477 aa).

The segment at 1–24 is disordered; it reads MPGSDTALTVDRTYSDPGRHHRCK. At S46 the chain carries Phosphoserine. 2 coiled-coil regions span residues 63-83 and 112-149; these read KVKLNADSLRQKILKVTEQIK and KQVFEKKNQKSAHSIAQLQKKLEQYHRKLREIEQNGVT. A disordered region spans residues 234–280; it reads ASPRAYGGSATIVNKPKYGSDDECSSGTSGSADSNGNQSFGAGGTST. Position 253 is a phosphoserine (S253). A compositionally biased stretch (polar residues) spans 258-280; sequence SSGTSGSADSNGNQSFGAGGTST. Positions 284 to 398 form a coiled coil; the sequence is QGKIAKIMEE…KLELHQQEQQ (115 aa). 2 helical membrane-spanning segments follow: residues 409–429 and 450–470; these read VLLGKCINVVLAFMTVILVCV and FFAVTLLAIFCKNWDHILCAI.

This sequence belongs to the TEX28 family. As to quaternary structure, may form homodimers and heterodimers with TMCC2 or TMCC3 via the coiled-coil domains. Interacts with ribosomal proteins RPL4 and RPS6.

Its subcellular location is the endoplasmic reticulum membrane. This chain is Transmembrane and coiled-coil domain protein 3, found in Mus musculus (Mouse).